A 542-amino-acid chain; its full sequence is DM7 family protein GG17591 (542 aa).

A compositionally biased stretch (basic and acidic residues) spans 415–430; that stretch reads GETQEMDEAHPTKEES. The disordered stretch occupies residues 415 to 443; that stretch reads GETQEMDEAHPTKEESKSEEEGEVQSGSQ.

This sequence belongs to the DM7 family.

The sequence is that of DM7 family protein GG17591 from Drosophila erecta (Fruit fly).